The following is a 276-amino-acid chain: Large ribosomal subunit protein uL2 (276 aa).

Disordered stretches follow at residues 37 to 59 (QIQKSGRNNNGHITTRHKGGGHK) and 225 to 276 (VMNP…RHKR). Polar residues predominate over residues 39 to 49 (QKSGRNNNGHI). The span at 50–59 (TTRHKGGGHK) shows a compositional bias: basic residues.

The protein belongs to the universal ribosomal protein uL2 family. As to quaternary structure, part of the 50S ribosomal subunit. Forms a bridge to the 30S subunit in the 70S ribosome.

Its function is as follows. One of the primary rRNA binding proteins. Required for association of the 30S and 50S subunits to form the 70S ribosome, for tRNA binding and peptide bond formation. It has been suggested to have peptidyltransferase activity; this is somewhat controversial. Makes several contacts with the 16S rRNA in the 70S ribosome. This chain is Large ribosomal subunit protein uL2, found in Ralstonia pickettii (strain 12J).